The primary structure comprises 388 residues: Putative F-box protein At3g49520 (388 aa).

Residues 1–47 (MTTISDLPYDLVKEIFSWVPFTSLRAVRSTCKTWNALSKNQIFGKKS) form the F-box domain.

The sequence is that of Putative F-box protein At3g49520 from Arabidopsis thaliana (Mouse-ear cress).